The chain runs to 68 residues: Small ribosomal subunit protein bS21 (68 aa).

This sequence belongs to the bacterial ribosomal protein bS21 family.

This Cereibacter sphaeroides (strain ATCC 17029 / ATH 2.4.9) (Rhodobacter sphaeroides) protein is Small ribosomal subunit protein bS21.